The primary structure comprises 406 residues: MTLFCEQVPYPRLAEAFGTPLYVYSQSALTEAFEHYQTAFAELSPLVCYAVKANGNLSIIKHFASLGSGFDIVSGGELARVLAAGGDAAKTIFSGVGKSEAEIEFALNAGVKCFNMESIPEIDRIQKVAARLGKTASVSLRVNPDVDAKTHPYISTGLKANKFGIAYADALEAYRHAAQQPNLKIIGIDCHIGSQLTDLSPLVEACERILILVDALAAEGIVLEHLDLGGGVGIVYQDEDVPDLGAYAQAVQKLIGTRRLKLILEPGRSLVGNAGALLTRVEFVKYGEEKNFVMVDAAMNDLMRPALYDAYHHIEAVEPKNIAPLTANIVGPICETGDFLGKDRTIACEEGDLLLIRSAGAYGASMASNYNARNRAAEVLVDGNEYRLIRRRETLEQQMANELACL.

Lysine 52 carries the N6-(pyridoxal phosphate)lysine modification. Residues glycine 231 and 265-268 contribute to the pyridoxal 5'-phosphate site; that span reads EPGR. Substrate-binding residues include arginine 268, arginine 304, and tyrosine 308. The Proton donor role is filled by cysteine 334. 2 residues coordinate substrate: glutamate 335 and tyrosine 362. Tyrosine 362 lines the pyridoxal 5'-phosphate pocket.

This sequence belongs to the Orn/Lys/Arg decarboxylase class-II family. LysA subfamily. Homodimer. Pyridoxal 5'-phosphate serves as cofactor.

The catalysed reaction is meso-2,6-diaminopimelate + H(+) = L-lysine + CO2. Its pathway is amino-acid biosynthesis; L-lysine biosynthesis via DAP pathway; L-lysine from DL-2,6-diaminopimelate: step 1/1. Specifically catalyzes the decarboxylation of meso-diaminopimelate (meso-DAP) to L-lysine. In Neisseria meningitidis serogroup A / serotype 4A (strain DSM 15465 / Z2491), this protein is Diaminopimelate decarboxylase.